The sequence spans 152 residues: Deoxyuridine 5'-triphosphate nucleotidohydrolase (152 aa).

Substrate is bound by residues 70–72 (RSG), Asn83, 87–89 (TID), and Lys97.

Belongs to the dUTPase family. The cofactor is Mg(2+).

It carries out the reaction dUTP + H2O = dUMP + diphosphate + H(+). It participates in pyrimidine metabolism; dUMP biosynthesis; dUMP from dCTP (dUTP route): step 2/2. Functionally, this enzyme is involved in nucleotide metabolism: it produces dUMP, the immediate precursor of thymidine nucleotides and it decreases the intracellular concentration of dUTP so that uracil cannot be incorporated into DNA. This is Deoxyuridine 5'-triphosphate nucleotidohydrolase from Corynebacterium diphtheriae (strain ATCC 700971 / NCTC 13129 / Biotype gravis).